A 574-amino-acid polypeptide reads, in one-letter code: Lengsin (574 aa).

2 disordered regions span residues 1-36 and 66-131; these read MNDEGDLLQENTRDEGNETEASRMSKLRRTRKKVTK and GNMS…IPTT. Basic and acidic residues predominate over residues 11–23; the sequence is NTRDEGNETEASR. The segment covering 25 to 36 has biased composition (basic residues); the sequence is SKLRRTRKKVTK. Residues 91-131 show a composition bias toward polar residues; sequence NQTTVIKPSPLKTSASAPCSEFNTNSNHADNTWEDTQIPTT. The GS beta-grasp domain maps to 148–242; sequence NHLQFVRFEA…VICDTFTVTG (95 aa). Residues 249 to 574 form the GS catalytic domain; sequence PRYIAKRQLS…ERNKFLEYFI (326 aa).

It belongs to the glutamine synthetase family. Dodecamer. Interacts with BFSP2 and VIM.

May act as a component of the cytoskeleton or as a chaperone for the reorganization of intermediate filament proteins during terminal differentiation in the lens. Does not seem to have enzymatic activity. The chain is Lengsin (LGSN) from Canis lupus familiaris (Dog).